The following is a 319-amino-acid chain: G-protein coupled receptor 171 (319 aa).

Residues 1-21 (MTNSSFFCPVYKDLEPFTYFF) lie on the Extracellular side of the membrane. Asparagine 3 carries N-linked (GlcNAc...) asparagine glycosylation. A helical transmembrane segment spans residues 22 to 42 (YLVFLVGIIGSCFATWAFIQK). Residues 43-48 (NTNHRC) lie on the Cytoplasmic side of the membrane. A helical transmembrane segment spans residues 49–69 (VSIYLINLLTADFLLTLALPV). The Extracellular segment spans residues 70-89 (KIVVDLGVAPWKLKIFHCQV). Residues 90-110 (TACLIYINMYLSIIFLAFVSI) form a helical membrane-spanning segment. Over 111–132 (DRCLQLTHSCKIYRIQEPGFAK) the chain is Cytoplasmic. Residues 133-153 (MISTVVWLMVLLIMVPNMMIP) traverse the membrane as a helical segment. At 154–181 (IKDIKEKSNVGCMEFKKEFGRNWHLLTN) the chain is on the extracellular side. A helical membrane pass occupies residues 182 to 202 (FICVAIFLNFSAIILISNCLV). The Cytoplasmic segment spans residues 203-224 (IRQLYRNKDNENYPNVKKALIN). Residues 225 to 245 (ILLVTTGYIICFVPYHIVRIP) traverse the membrane as a helical segment. Over 246 to 268 (YTLSQTEVITDCSTRISLFKAKE) the chain is Extracellular. The chain crosses the membrane as a helical span at residues 269-289 (ATLLLAVSNLCFDPILYYHLS). Residues 290 to 319 (KAFRSKVTETFASPKETKAQKEKLRCENNA) lie on the Cytoplasmic side of the membrane.

It belongs to the G-protein coupled receptor 1 family. As to expression, expressed in both T-cell subsets and natural killer cells, while it is undetectable in B cells or CD14(+) monocytes. Expressed in peripheral blood mononuclear cells (PBMC) and Jurkat cells (at protein level).

The protein localises to the cell membrane. In terms of biological role, G-protein coupled receptor for Big LEN, a 16-amino acid neuropeptide produced from the precursor protein, proSAAS (encoded by PCSK1N). Acts through a G(i)-alpha-mediated pathway in response to Big LEN. Big LEN-GPR171 system plays an important role in regulating feeding and metabolism. Also plays a role in modulating fear and anxiety-like behaviors in the basolateral amygdala. Big LEN-GPR171 modulates the mu-type opioid receptor signaling and antinociception. Acts as a negative regulator T cell function. The protein is G-protein coupled receptor 171 of Homo sapiens (Human).